A 200-amino-acid chain; its full sequence is Imidazoleglycerol-phosphate dehydratase (200 aa).

The protein belongs to the imidazoleglycerol-phosphate dehydratase family.

Its subcellular location is the cytoplasm. The catalysed reaction is D-erythro-1-(imidazol-4-yl)glycerol 3-phosphate = 3-(imidazol-4-yl)-2-oxopropyl phosphate + H2O. Its pathway is amino-acid biosynthesis; L-histidine biosynthesis; L-histidine from 5-phospho-alpha-D-ribose 1-diphosphate: step 6/9. The polypeptide is Imidazoleglycerol-phosphate dehydratase (Chlorobium phaeobacteroides (strain BS1)).